We begin with the raw amino-acid sequence, 365 residues long: tRNA/tmRNA (uracil-C(5))-methyltransferase (365 aa).

Residues Q189, Y217, N222, E238, and D298 each contribute to the S-adenosyl-L-methionine site. The Nucleophile role is filled by C323. The active-site Proton acceptor is the E357.

Belongs to the class I-like SAM-binding methyltransferase superfamily. RNA M5U methyltransferase family. TrmA subfamily.

It carries out the reaction uridine(54) in tRNA + S-adenosyl-L-methionine = 5-methyluridine(54) in tRNA + S-adenosyl-L-homocysteine + H(+). The enzyme catalyses uridine(341) in tmRNA + S-adenosyl-L-methionine = 5-methyluridine(341) in tmRNA + S-adenosyl-L-homocysteine + H(+). Functionally, dual-specificity methyltransferase that catalyzes the formation of 5-methyluridine at position 54 (m5U54) in all tRNAs, and that of position 341 (m5U341) in tmRNA (transfer-mRNA). The sequence is that of tRNA/tmRNA (uracil-C(5))-methyltransferase from Pseudoalteromonas atlantica (strain T6c / ATCC BAA-1087).